We begin with the raw amino-acid sequence, 126 residues long: Plastocyanin (126 aa).

Positions 1 to 28 (MSKKFLTILAGLLLVVSSFFLSVSPAAA) are cleaved as a signal peptide. The 98-residue stretch at 29–126 (ANATVKMGSD…AGMVGKVVVE (98 aa)) folds into the Plastocyanin-like domain. Cu cation-binding residues include histidine 67, cysteine 111, histidine 114, and methionine 119.

The protein belongs to the plastocyanin family. Cu(2+) serves as cofactor.

It is found in the cellular thylakoid membrane. Its function is as follows. Participates in electron transfer between P700 and the cytochrome b6-f complex in photosystem I. The polypeptide is Plastocyanin (petE) (Synechocystis sp. (strain ATCC 27184 / PCC 6803 / Kazusa)).